The following is a 259-amino-acid chain: Major cell-binding factor (259 aa).

The first 26 residues, 1–26 (MVFRKSLLKLAVFALGACVAFSNANA), serve as a signal peptide directing secretion.

Belongs to the bacterial solute-binding protein 3 family.

The protein resides in the cell surface. In terms of biological role, common antigen and a major cell adherence molecule. Most probably involved, with PEB1C, in a binding-protein-dependent transport system for an amino acid. May be involved in binding to intestinal cells. The sequence is that of Major cell-binding factor (peb1A) from Campylobacter jejuni subsp. jejuni serotype O:23/36 (strain 81-176).